Here is a 413-residue protein sequence, read N- to C-terminus: Mitochondrial inner membrane magnesium transporter MFM1 (413 aa).

The transit peptide at 1 to 35 (MRAFPRVLPFRHQRSYNNILLRTVRLFGSSLSSFD) directs the protein to the mitochondrion. N-linked (GlcNAc...) asparagine glycosylation occurs at Asn202. A helical transmembrane segment spans residues 329–349 (LMLLGIRYAIGMLSLGGALFL). Residues 353-356 (YGMN) carry the YGMN motif. Residues 367 to 387 (AYLTVTILGLISTVWLYAKGI) traverse the membrane as a helical segment.

The protein belongs to the CorA metal ion transporter (MIT) (TC 1.A.35) family. In terms of assembly, forms homooligomers. Interacts with MRS2. In terms of processing, N-glycosylated. Glycosylation is important for correct localization of the protein.

The protein resides in the mitochondrion inner membrane. Mitochondrial inner membrane magnesium transporter required for mitochondrial magnesium homeostasis. Modulates the conductance of the MRS2 channel. Involved in the splicing of mRNA group II introns in mitochondria by affecting mitochondrial magnesium concentrations, which are critical for group II intron splicing. The sequence is that of Mitochondrial inner membrane magnesium transporter MFM1 (MFM1) from Saccharomyces cerevisiae (strain ATCC 204508 / S288c) (Baker's yeast).